Consider the following 803-residue polypeptide: Putative metal ion transporter C27B12.12c (803 aa).

Polar residues predominate over residues 1–20; that stretch reads MSFQQPSNGAQGGNNNALEK. The disordered stretch occupies residues 1–255; that stretch reads MSFQQPSNGA…SSDVSGSDEN (255 aa). Residues 21–45 are compositionally biased toward low complexity; the sequence is TSSNEATSSSSTQVSSLSASGISVS. A compositionally biased stretch (polar residues) spans 58–82; sequence MQVQSSQHLEANVQSPVSSQTTYAT. Basic residues-rich tracts occupy residues 105-123 and 152-166; these read KPKK…RKKI and QSNK…KHSP. Low complexity-rich tracts occupy residues 181–194 and 218–253; these read ALSA…QHAS and SSSS…SGSD. Phosphoserine is present on Ser-318. 2 disordered regions span residues 326-349 and 406-431; these read PRLK…QVDE and FEPH…NNAE. The segment covering 337-347 has biased composition (acidic residues); it reads DNEDREVDSQV. The span at 406 to 419 shows a compositional bias: basic and acidic residues; it reads FEPHWNDLSPHDPN. Positions 420 to 430 are enriched in polar residues; it reads DPSSSLHSNNA. Ser-449 and Ser-452 each carry phosphoserine. Transmembrane regions (helical) follow at residues 745 to 765 and 776 to 796; these read ITLI…FGMN and LAWF…GWII.

Belongs to the CorA metal ion transporter (MIT) (TC 1.A.35) family.

The protein localises to the cytoplasm. The protein resides in the membrane. This is Putative metal ion transporter C27B12.12c from Schizosaccharomyces pombe (strain 972 / ATCC 24843) (Fission yeast).